Consider the following 253-residue polypeptide: Nurim homolog (253 aa).

Residues 1-2 (MT) are Nuclear-facing. A helical transmembrane segment spans residues 3–30 (SIAKSIVLLASLATFAYSLYVVGSLMMF). Topologically, residues 31–56 (LSTPRSISKAHTWIFNLLDNKSRLQT) are perinuclear space. Residues 57 to 78 (AYGPVVFDTLYLIGFIFQHSFL) traverse the membrane as a helical segment. The Nuclear portion of the chain corresponds to 79 to 96 (KSAVVKKLLAKLGLSGAE). The helical transmembrane segment at 97–113 (RTIYSLTSSLCLHYLIV) threads the bilayer. The Perinuclear space segment spans residues 114-132 (NWLPAQSIVLWQIDVEQSA). The chain crosses the membrane as a helical span at residues 133 to 161 (PLWWTFVITHGICWVVIFGGSLVMDLPEL). Residues 162–188 (LGVKQAYYDLKAYGPPISYKSGELRNL) are Nuclear-facing. A helical transmembrane segment spans residues 189–207 (YAHVRHPSFVGLSVILFAT). The Perinuclear space segment spans residues 208-213 (NVMSVD). The chain crosses the membrane as a helical span at residues 214–231 (RLVMALLLTTYMYLAWST). Over 232–253 (DQKDVAYQKIQLQRKKLELKAK) the chain is Nuclear.

This sequence belongs to the nurim family.

Its subcellular location is the nucleus inner membrane. The protein is Nurim homolog (nrm) of Drosophila melanogaster (Fruit fly).